Here is a 485-residue protein sequence, read N- to C-terminus: N-succinylglutamate 5-semialdehyde dehydrogenase (485 aa).

220 to 225 (GSANTG) is an NAD(+) binding site. Residues glutamate 243 and cysteine 278 contribute to the active site.

It belongs to the aldehyde dehydrogenase family. AstD subfamily.

It catalyses the reaction N-succinyl-L-glutamate 5-semialdehyde + NAD(+) + H2O = N-succinyl-L-glutamate + NADH + 2 H(+). It participates in amino-acid degradation; L-arginine degradation via AST pathway; L-glutamate and succinate from L-arginine: step 4/5. Catalyzes the NAD-dependent reduction of succinylglutamate semialdehyde into succinylglutamate. The sequence is that of N-succinylglutamate 5-semialdehyde dehydrogenase from Vibrio atlanticus (strain LGP32) (Vibrio splendidus (strain Mel32)).